We begin with the raw amino-acid sequence, 95 residues long: Small ribosomal subunit protein uS19 (95 aa).

The tract at residues 73 to 95 (EFSPTRSYRGHGADKNAKGSKKK) is disordered.

The protein belongs to the universal ribosomal protein uS19 family.

Protein S19 forms a complex with S13 that binds strongly to the 16S ribosomal RNA. The polypeptide is Small ribosomal subunit protein uS19 (Deinococcus deserti (strain DSM 17065 / CIP 109153 / LMG 22923 / VCD115)).